We begin with the raw amino-acid sequence, 263 residues long: uncharacterized protein (263 aa).

31-38 (GPTGSGKT) is an ATP binding site.

This sequence belongs to the CbbQ/NirQ/NorQ/GpvN family.

This is an uncharacterized protein from Staphylococcus epidermidis (strain ATCC 12228 / FDA PCI 1200).